The following is a 427-amino-acid chain: Serine hydroxymethyltransferase (427 aa).

(6S)-5,6,7,8-tetrahydrofolate contacts are provided by residues Leu127 and 131–133 (GHL). Position 236 is an N6-(pyridoxal phosphate)lysine (Lys236).

The protein belongs to the SHMT family. In terms of assembly, homodimer. Pyridoxal 5'-phosphate serves as cofactor.

It is found in the cytoplasm. The catalysed reaction is (6R)-5,10-methylene-5,6,7,8-tetrahydrofolate + glycine + H2O = (6S)-5,6,7,8-tetrahydrofolate + L-serine. Its pathway is one-carbon metabolism; tetrahydrofolate interconversion. It functions in the pathway amino-acid biosynthesis; glycine biosynthesis; glycine from L-serine: step 1/1. In terms of biological role, catalyzes the reversible interconversion of serine and glycine with tetrahydrofolate (THF) serving as the one-carbon carrier. This reaction serves as the major source of one-carbon groups required for the biosynthesis of purines, thymidylate, methionine, and other important biomolecules. Also exhibits THF-independent aldolase activity toward beta-hydroxyamino acids, producing glycine and aldehydes, via a retro-aldol mechanism. This is Serine hydroxymethyltransferase from Paramagnetospirillum magneticum (strain ATCC 700264 / AMB-1) (Magnetospirillum magneticum).